We begin with the raw amino-acid sequence, 63 residues long: Large ribosomal subunit protein uL29 (63 aa).

It belongs to the universal ribosomal protein uL29 family.

The polypeptide is Large ribosomal subunit protein uL29 (Shewanella denitrificans (strain OS217 / ATCC BAA-1090 / DSM 15013)).